We begin with the raw amino-acid sequence, 180 residues long: ATP synthase subunit delta (180 aa).

Belongs to the ATPase delta chain family. As to quaternary structure, F-type ATPases have 2 components, F(1) - the catalytic core - and F(0) - the membrane proton channel. F(1) has five subunits: alpha(3), beta(3), gamma(1), delta(1), epsilon(1). F(0) has three main subunits: a(1), b(2) and c(10-14). The alpha and beta chains form an alternating ring which encloses part of the gamma chain. F(1) is attached to F(0) by a central stalk formed by the gamma and epsilon chains, while a peripheral stalk is formed by the delta and b chains.

Its subcellular location is the cell membrane. Functionally, f(1)F(0) ATP synthase produces ATP from ADP in the presence of a proton or sodium gradient. F-type ATPases consist of two structural domains, F(1) containing the extramembraneous catalytic core and F(0) containing the membrane proton channel, linked together by a central stalk and a peripheral stalk. During catalysis, ATP synthesis in the catalytic domain of F(1) is coupled via a rotary mechanism of the central stalk subunits to proton translocation. This protein is part of the stalk that links CF(0) to CF(1). It either transmits conformational changes from CF(0) to CF(1) or is implicated in proton conduction. The sequence is that of ATP synthase subunit delta from Lactobacillus delbrueckii subsp. bulgaricus (strain ATCC 11842 / DSM 20081 / BCRC 10696 / JCM 1002 / NBRC 13953 / NCIMB 11778 / NCTC 12712 / WDCM 00102 / Lb 14).